Consider the following 218-residue polypeptide: Glutathione S-transferase class-mu 26 kDa isozyme 51 (218 aa).

The 82-residue stretch at 2–83 folds into the GST N-terminal domain; that stretch reads PAKLGYWKIR…YIADKHGMLG (82 aa). Residues 7–8, 41–45, 54–55, and 67–68 each bind glutathione; these read YW, WFGDK, NL, and QS. Residues 85 to 203 enclose the GST C-terminal domain; that stretch reads TPEERARISM…ESEKFIKWPL (119 aa). Position 111 (Tyr-111) interacts with substrate.

The protein belongs to the GST superfamily. Mu family. As to quaternary structure, homodimer.

The protein localises to the cytoplasm. It catalyses the reaction RX + glutathione = an S-substituted glutathione + a halide anion + H(+). Functionally, conjugation of reduced glutathione to a wide number of exogenous and endogenous hydrophobic electrophiles. Its function is as follows. GST isoenzymes appear to play a central role in the parasite detoxification system. Other functions are also suspected including a role in increasing the solubility of haematin in the parasite gut. This is Glutathione S-transferase class-mu 26 kDa isozyme 51 from Fasciola hepatica (Liver fluke).